The sequence spans 204 residues: uncharacterized protein (204 aa).

A signal peptide spans 1–16 (MKYTFLAVLSAVTVLA).

It localises to the secreted. This is an uncharacterized protein from Arthroderma benhamiae (strain ATCC MYA-4681 / CBS 112371) (Trichophyton mentagrophytes).